The chain runs to 329 residues: Quinone-oxidoreductase QR1, chloroplastic (329 aa).

This sequence belongs to the zinc-containing alcohol dehydrogenase family. Quinone oxidoreductase subfamily.

Its subcellular location is the plastid. It localises to the chloroplast outer membrane. It catalyses the reaction 2 a quinone + NADPH + H(+) = 2 a 1,4-benzosemiquinone + NADP(+). Its activity is regulated as follows. Inhibited by dicumarol. Functionally, NADPH-dependent single-electron reducing quinone reductase. Involved in haustorium initiation in parasitic plants through redox cycling of exogenous haustorium-inducing factors. Can use 9,10-phenanthrenequinone (PAQ), 1,2-naphthoquinone, 5-hydroxy-1,4-naphthoquinone (juglone) and 2,6-dimethoxy-p-benzoquinone (DMBQ) as substrates, but has no activity with menadione, diamide, 2,3-dimethoxy-5-methyl-1,4-benzoquinone or 1,4-naphthoquinone. The sequence is that of Quinone-oxidoreductase QR1, chloroplastic from Triphysaria versicolor (Yellow owl's clover).